Reading from the N-terminus, the 507-residue chain is Glycerol kinase (507 aa).

Thr13 is an ADP binding site. ATP-binding residues include Thr13, Thr14, and Ser15. Thr13 contacts sn-glycerol 3-phosphate. Arg17 provides a ligand contact to ADP. The sn-glycerol 3-phosphate site is built by Arg83, Glu84, Tyr135, and Asp245. Glycerol contacts are provided by Arg83, Glu84, Tyr135, Asp245, and Gln246. Thr267 and Gly310 together coordinate ADP. Positions 267, 310, 314, and 411 each coordinate ATP. ADP-binding residues include Gly411 and Asn415.

It belongs to the FGGY kinase family.

It catalyses the reaction glycerol + ATP = sn-glycerol 3-phosphate + ADP + H(+). It participates in polyol metabolism; glycerol degradation via glycerol kinase pathway; sn-glycerol 3-phosphate from glycerol: step 1/1. Its activity is regulated as follows. Inhibited by fructose 1,6-bisphosphate (FBP). Key enzyme in the regulation of glycerol uptake and metabolism. Catalyzes the phosphorylation of glycerol to yield sn-glycerol 3-phosphate. The protein is Glycerol kinase of Halorhodospira halophila (strain DSM 244 / SL1) (Ectothiorhodospira halophila (strain DSM 244 / SL1)).